A 433-amino-acid chain; its full sequence is E3 ubiquitin-protein ligase RNF26 (433 aa).

Helical transmembrane passes span 24-44, 60-80, 147-169, 183-203, and 220-240; these read LNFL…AFVY, GVLL…CGGL, VINS…VLAL, VVAA…ILLW, and LASF…VLAV. Residues 380–422 form an RING-type zinc finger; the sequence is CVICQDQSKTVLLLPCRHLCLCQACTEILMRHPVYHRNCPLCR.

In terms of assembly, interacts with INCA1. Interacts with TMEM43, ENDOD1, TMEM33 and TMED1 to form a complex capable of modulating innate immune signaling through the cGAS-STING pathway. Interacts with UBE2J1; this interaction is important for SQSTM1 ubiquitination. In terms of tissue distribution, ubiquitous. Up-regulated in several cancer cell lines.

Its subcellular location is the endoplasmic reticulum membrane. It carries out the reaction S-ubiquitinyl-[E2 ubiquitin-conjugating enzyme]-L-cysteine + [acceptor protein]-L-lysine = [E2 ubiquitin-conjugating enzyme]-L-cysteine + N(6)-ubiquitinyl-[acceptor protein]-L-lysine.. It functions in the pathway protein modification; protein ubiquitination. Functionally, E3 ubiquitin-protein ligase that plays a key role in endosome organization by retaining vesicles in the perinuclear cloud. Acts as a platform for perinuclear positioning of the endosomal system by mediating ubiquitination of SQSTM1 through interaction with the ubiquitin conjugating enzyme UBE2J1. Ubiquitinated SQSTM1 attracts specific vesicle-associated adapters, forming a molecular bridge that restrains cognate vesicles in the perinuclear region and organizes the endosomal pathway for efficient cargo transport. Also acts as a regulator of type I interferon production in response to viral infection by mediating the formation of 'Lys-11'-linked polyubiquitin chains on TMEM173/STING, leading to stabilize TMEM173/STING. Also required to limit type I interferon response by promoting autophagic degradation of IRF3. In Homo sapiens (Human), this protein is E3 ubiquitin-protein ligase RNF26.